A 340-amino-acid polypeptide reads, in one-letter code: Ketol-acid reductoisomerase (NADP(+)) (340 aa).

Residues 3–182 (VQMEYEKDVK…GAARVGLLET (180 aa)) enclose the KARI N-terminal Rossmann domain. NADP(+) contacts are provided by residues 26–29 (YGSQ), arginine 49, serine 53, and 83–86 (DEIQ). Histidine 108 is an active-site residue. Glycine 134 lines the NADP(+) pocket. Positions 183 to 328 (TYKEETEEDL…AELRKAMPFV (146 aa)) constitute a KARI C-terminal knotted domain. Aspartate 191, glutamate 195, glutamate 227, and glutamate 231 together coordinate Mg(2+). Serine 252 is a binding site for substrate.

It belongs to the ketol-acid reductoisomerase family. Requires Mg(2+) as cofactor.

The catalysed reaction is (2R)-2,3-dihydroxy-3-methylbutanoate + NADP(+) = (2S)-2-acetolactate + NADPH + H(+). It carries out the reaction (2R,3R)-2,3-dihydroxy-3-methylpentanoate + NADP(+) = (S)-2-ethyl-2-hydroxy-3-oxobutanoate + NADPH + H(+). The protein operates within amino-acid biosynthesis; L-isoleucine biosynthesis; L-isoleucine from 2-oxobutanoate: step 2/4. It participates in amino-acid biosynthesis; L-valine biosynthesis; L-valine from pyruvate: step 2/4. In terms of biological role, involved in the biosynthesis of branched-chain amino acids (BCAA). Catalyzes an alkyl-migration followed by a ketol-acid reduction of (S)-2-acetolactate (S2AL) to yield (R)-2,3-dihydroxy-isovalerate. In the isomerase reaction, S2AL is rearranged via a Mg-dependent methyl migration to produce 3-hydroxy-3-methyl-2-ketobutyrate (HMKB). In the reductase reaction, this 2-ketoacid undergoes a metal-dependent reduction by NADPH to yield (R)-2,3-dihydroxy-isovalerate. This Streptococcus pneumoniae (strain CGSP14) protein is Ketol-acid reductoisomerase (NADP(+)).